Consider the following 605-residue polypeptide: Tyrosyl-DNA phosphodiesterase 1 (605 aa).

A Nuclear localization signal motif is present at residues 81–86 (RKKVKP). The Nucleophile role is filled by His-236. Lys-238 provides a ligand contact to substrate. The interval 379-382 (SLGS) is interaction with DNA. His-466 serves as the catalytic Proton donor/acceptor. Lys-468 is a substrate binding site.

Belongs to the tyrosyl-DNA phosphodiesterase family. Ubiquitous, with a low level in roots.

It localises to the nucleus. Its activity is regulated as follows. Inhibited by vanadate analogs. In terms of biological role, DNA repair enzyme that can remove a variety of covalent adducts from DNA through hydrolysis of a 3'-phosphodiester bond, giving rise to DNA with a free 3' phosphate. Catalyzes the hydrolysis of dead-end complexes between DNA and the topoisomerase I active site tyrosine residue. This Arabidopsis thaliana (Mouse-ear cress) protein is Tyrosyl-DNA phosphodiesterase 1.